The primary structure comprises 457 residues: Argininosuccinate lyase (457 aa).

Belongs to the lyase 1 family. Argininosuccinate lyase subfamily.

The protein localises to the cytoplasm. It carries out the reaction 2-(N(omega)-L-arginino)succinate = fumarate + L-arginine. It functions in the pathway amino-acid biosynthesis; L-arginine biosynthesis; L-arginine from L-ornithine and carbamoyl phosphate: step 3/3. The chain is Argininosuccinate lyase from Serratia proteamaculans (strain 568).